A 327-amino-acid chain; its full sequence is Tartrate-resistant acid phosphatase type 5 (327 aa).

Positions Met-1–Thr-22 are cleaved as a signal peptide. 4 residues coordinate Fe cation: Asp-35, Asp-73, Tyr-76, and Asn-112. N-linked (GlcNAc...) asparagine glycosylation is found at Asn-118 and Asn-149. Cys-163 and Cys-221 are disulfide-bonded. Fe cation contacts are provided by His-207, His-242, and His-244.

In terms of assembly, exists either as monomer or, after proteolytic processing, as a dimer of two chains linked by disulfide bond(s). It depends on Fe cation as a cofactor. As to expression, characteristic constituent of osteoclasts and some mononuclear preosteoclasts. Preferentially expressed in skeletal tissues.

Its subcellular location is the lysosome. The enzyme catalyses a phosphate monoester + H2O = an alcohol + phosphate. Functionally, may play a role in the process of bone resorption. The osteoclastic trap acts on nucleotide tri- and diphosphates with higher affinity, compared with other substrates. The chain is Tartrate-resistant acid phosphatase type 5 (Acp5) from Rattus norvegicus (Rat).